Here is a 417-residue protein sequence, read N- to C-terminus: NADH-quinone oxidoreductase subunit D (417 aa).

The protein belongs to the complex I 49 kDa subunit family. NDH-1 is composed of 14 different subunits. Subunits NuoB, C, D, E, F, and G constitute the peripheral sector of the complex.

Its subcellular location is the cell inner membrane. It carries out the reaction a quinone + NADH + 5 H(+)(in) = a quinol + NAD(+) + 4 H(+)(out). Its function is as follows. NDH-1 shuttles electrons from NADH, via FMN and iron-sulfur (Fe-S) centers, to quinones in the respiratory chain. The immediate electron acceptor for the enzyme in this species is believed to be ubiquinone. Couples the redox reaction to proton translocation (for every two electrons transferred, four hydrogen ions are translocated across the cytoplasmic membrane), and thus conserves the redox energy in a proton gradient. In Polynucleobacter necessarius subsp. necessarius (strain STIR1), this protein is NADH-quinone oxidoreductase subunit D.